Consider the following 263-residue polypeptide: MAKRLQAELSCPVCLDFFSCSISLSCTHVFCFDCIQRYILENHDFRAMCPLCRDVVKVPALEEWQVSVLTLMTKQHNSRLEQSLHVREELRHFREDVTLDAATASSLLVFSNDLRSAQCKKIHHDLTKDPRLACVLGTPCFSSGQHYWEVEVGEVKSWSLGVCKEPADRKSNDLFPEHGFWISMKAGAIHANTHLERIPASPRLRRVGIFLDADLEEIQFFDVDNNVLIYTHDGFFSLELLCPFFCLELLGEGESGNVLTICP.

An RING-type zinc finger spans residues 11 to 53; the sequence is CPVCLDFFSCSISLSCTHVFCFDCIQRYILENHDFRAMCPLCR. A B30.2/SPRY domain is found at 76-263; that stretch reads HNSRLEQSLH…ESGNVLTICP (188 aa).

This chain is Ret finger protein-like 4B (RFPL4B), found in Homo sapiens (Human).